Here is a 541-residue protein sequence, read N- to C-terminus: Malate synthase (541 aa).

Arg169 functions as the Proton acceptor in the catalytic mechanism. Asp454 functions as the Proton donor in the catalytic mechanism.

The protein belongs to the malate synthase family.

The protein localises to the cytoplasm. The catalysed reaction is glyoxylate + acetyl-CoA + H2O = (S)-malate + CoA + H(+). The protein operates within carbohydrate metabolism; glyoxylate cycle; (S)-malate from isocitrate: step 2/2. This is Malate synthase (aceB) from Streptomyces clavuligerus.